Consider the following 114-residue polypeptide: Mediator of RNA polymerase II transcription subunit 11 (114 aa).

The stretch at 28–61 (LELSKEKANASLLDRQLNQFQTSINRVESELSSQ) forms a coiled coil.

It belongs to the Mediator complex subunit 11 family. In terms of assembly, component of the Mediator complex. In terms of tissue distribution, ubiquitously expressed at early stage of development. After fertilization expressed in head region as well as in lateral line primordium.

It localises to the nucleus. Functionally, component of the Mediator complex, a coactivator involved in the regulated transcription of nearly all RNA polymerase II-dependent genes. Mediator functions as a bridge to convey information from gene-specific regulatory proteins to the basal RNA polymerase II transcription machinery. Mediator is recruited to promoters by direct interactions with regulatory proteins and serves as a scaffold for the assembly of a functional pre-initiation complex with RNA polymerase II and the general transcription factors. The protein is Mediator of RNA polymerase II transcription subunit 11 (med11) of Danio rerio (Zebrafish).